Here is a 1551-residue protein sequence, read N- to C-terminus: MSKRVLIIAVVVYLVFTTQNQITGNHTTINSSSPSTTEASSTPTVSRTPQTTTTSTAVSTTITATTTPTASWTTQSQYFNKTTQHHWREETMISRNPTVLDRQSRASSVRELLNTKFLMLLGFIPKGEVNHLENACNREGKNCTELILKERIARFFSETEKESCYNTYLEKHLRSVSPEVSLTPYRVLGLREDILLKEIDRRIIRFETDSQRVTCLSASLLKPDVFIREQRIDAKPSNGPKIVPVDSVACMNLEANVDVRSNKLVIQSLMTTVKISLKNCKVVVNSRQCIHQQTGSGVIKVPKFEKQQGGTWSSYIAGVYTATIDLLDENNQNCKLFTECIVKGRELVKGQSELKSFNIEVLLPRVMKTRRKLLAVTDGSTECNSGTQLIEGKSIEVHKQDIGGPGKKLTICNGTSVLDVPLDEGHGCYTINVITSKRACRPKNSKLQCSIDKELKPCDSGKCLSISQKGAGHIKVSRGKTILITECKEHCQIPVPTGKGDIMVDCSGGRQHYLEVNIVDIHCPNTKFLGGIMLYFCRMSSRPTVALLLGIWIGCGYILTCIFSFLLYHLILFFANCIKQCRKKGERLGEICVKCEQQTVNLMDQELHDLNCNFNLCPYCCNRMSDEGMSRHVGKCPKRLERLNEIELYLTTSECLCLSVCYQLLISVGIFLKRTTWLVVLLVLLGLAISPVQGAPTEVSNVKQDGDYSICYFIFGCLVTAALLLKVKRTNSNGIVVVVDSFGRCPYCNEFTDSLFEEVLHDTLCSLCVCPFCEKQALDLVTLEEHVKECYKVATRKDIFKILGRKFTNALVRREKLFTTGLQLFINKTNVVVFALIMCFLLLLTGHNASAFDSGDLPDGVWEESSQLVKSCTQFCYIEEDVCYCPAEDGVGRKLLFFNGLQNSVKRLSDSHKLLTSVSIDAPWGRINVESTWKPTLAASNIAMSWSSTDIKGEKVILSGRSTSIIKLKEKTGVMWKLVGSGLASEKKKPFRFPIMDFAQVYNSVFQYITGDRLLSEWPKAVCTGDCPHRCGCQTSTCMAKECHTQECVSTHMVLGIGTGCTCCGMDVERPFNKYLGVKWSTEYLRTEVLVCVEVTEEERHCEIVEAGTRFNIGPITITISDPQNIGSKLPESLMTVQEIDDSNFVDIMHVGNVISADNSCRLQSCTHGSAVTTRFTALTALIKDDHSSGLNLAVLDPKVNSSWLSWEGCDMDYYCNVGDWPTCTYTGVVTQKLREFLKLDQHRKRLHTTLSFSLKKNLSKRSHTSVRLEGKTVTRMEVKVTALIEVDGMELHSKTIRLSGIRLTGLKCSGCFSCTSGISCSVNAKLTSPDEFTLHLRSTSPNVVVAETSIIARKGPSATTSRFKVFSVRDTKKICFEVVEREYCKDCTPDELTTCTGVELEPTKDILLEHRGTIVQHQNDTCKSKIDCWSNSISSFASGIGDFFKHYIGSIAVGVLGTVLPFALLILFFIYGDKMLWPFKVFCRPCRRCCRKNEGYNKLAEEEELRDIIRKFSKSGELINKDAKDKRTLARLFMSDNPKLKKEKKLSEIA.

An N-terminal signal peptide occupies residues 1 to 17 (MSKRVLIIAVVVYLVFT). Residues 18–546 (TQNQITGNHT…CRMSSRPTVA (529 aa)) lie on the Lumenal side of the membrane. The tract at residues 24–66 (GNHTTINSSSPSTTEASSTPTVSRTPQTTTTSTAVSTTITATT) is disordered. N-linked (GlcNAc...) asparagine; by host glycosylation is found at asparagine 25 and asparagine 30. The span at 31 to 66 (SSSPSTTEASSTPTVSRTPQTTTTSTAVSTTITATT) shows a compositional bias: low complexity. Asparagine 80, asparagine 142, and asparagine 413 each carry an N-linked (GlcNAc...) asparagine; by host glycan. A helical membrane pass occupies residues 547 to 567 (LLLGIWIGCGYILTCIFSFLL). At 568–675 (YHLILFFANC…ISVGIFLKRT (108 aa)) the chain is on the cytoplasmic side. The chain crosses the membrane as a helical span at residues 676-696 (TWLVVLLVLLGLAISPVQGAP). The Lumenal portion of the chain corresponds to 697–704 (TEVSNVKQ). A helical membrane pass occupies residues 705–725 (DGDYSICYFIFGCLVTAALLL). Over 726–823 (KVKRTNSNGI…REKLFTTGLQ (98 aa)) the chain is Cytoplasmic. A helical transmembrane segment spans residues 824–844 (LFINKTNVVVFALIMCFLLLL). Residues 845-1451 (TGHNASAFDS…GDFFKHYIGS (607 aa)) are Lumenal-facing. N-linked (GlcNAc...) asparagine; by host glycosylation is found at asparagine 848, asparagine 1201, asparagine 1258, and asparagine 1420. An intrachain disulfide couples cysteine 1023 to cysteine 1216. A helical membrane pass occupies residues 1452 to 1472 (IAVGVLGTVLPFALLILFFIY). Topologically, residues 1473–1551 (GDKMLWPFKV…KKEKKLSEIA (79 aa)) are cytoplasmic.

Belongs to the nairovirus envelope glycoprotein family. Heterodimer with glycoprotein C; in prefusion state. In terms of assembly, heterodimer with glycoprotein N; in prefusion state. Homotrimeric; in postfusion state. Specific enzymatic cleavage by host MBTPS1/S1P/SKI-1 endopeptidase yield glycoprotein N. Specific enzymatic cleavages by host furin-like protease and MBTPS1/S1P endopeptidase yield GP38. Post-translationally, glycosylated.

It is found in the host endoplasmic reticulum membrane. The protein localises to the virion membrane. It localises to the host Golgi apparatus membrane. Functionally, glycoprotein N and glycoprotein C interact with each other and are present at the surface of the virion. Glycoprotein N probably locks the Gn-Gc complex in a prefusion state. Glycoprotein N and glycoprotein C are able to attach the virion to host cell receptors. This attachment induces virion internalization predominantly through clathrin-dependent endocytosis. Glycoprotein C and glycoprotein N interact with each other and are present at the surface of the virion. The spikes at the surface of the virion are formed by an N-terminal extension of glycoprotein C. Glycoprotein N and glycoprotein C are able to attach the virion to host cell receptors. This attachment induces virion internalization predominantly through clathrin-dependent endocytosis. Class II fusion protein that promotes fusion of viral membrane with host endosomal membrane after endocytosis of the virion. Exposure to potassium is necessary for the conformational change leading to fusion. In Amblyomma variegatum (Tropical bont tick), this protein is Envelopment polyprotein (GP).